The following is a 931-amino-acid chain: MMDDTAMPARAEADAAEDELAAPAGIDRTAKADKDANRVSPMMAQYVEIKAANPGSLLFYRMGDFYELFFEDAEIASQALGIVLTKRGKHLGEDIPMCGVPLTRSEEYLHKLIALGHRVAVCDQLEDPAEAKKRGSKSVVKRDVIRLVTPGTITEDSLLDAKRENVLLAVARTRASGEGAYDYALAFTDVSTGSFRVVASDGDMLAADLARIDPAEILVSDAVYDDEELRDFWRGLSTPVTPLPKQSFDGPQAEKRLAAFFGVATADSFGSFARAELIAAAAVVAYIERTQLGARPALAPPQREADGGSMLIDAGTRVNLELIRTTSGERRGSLLAAIDRTVTAAGARLLARRLAEPLTDIAAIRARHDAVGFLVEETELREALRKRLAAAPDLARALSRISLGRGSPRDLGAIAAGLKEGLAISSAFGPETPRDIARCARLLAAVEPWLAEELTAALADELPLNRRDGGFVRQGYDLDLDSTRALRDESRRVVAALERRYVDETGIKSLKIRHNAVLGYFVEVTAQNADRLREAPFNATFVHRQTMAGAVRFTSVELGDLESRIASAGERALALEQTIFDRLAAAVIEASRPIREAAEALAELDVLTALARLAVDERYVRPEMTEGVDFAISGGRHPVVEQALARGGGPFVANDCDLSPPETAQDARIWLVTGPNMAGKSTFLRQNALIAVLAQAGAFVPARAARLGVVDRLFSRVGAADDLARGRSTFMVEMVETAAILNQATRRSLVILDEIGRGTSTFDGMSIAWASLEHLHEVNRCRALFATHFHELTALTQRCQRLANATVKVTEWQGDVVFLHEVIPGAADRSYGIQVAKLAGLPKMVIARAKAVLTELEAAERVSPAQRLLDELPLFAAAARPAPTLAAPTGPHPAEPVLEELDRLDPDALTPRAALDALYRLKAMLRDAADD.

Residues 1-10 show a composition bias toward low complexity; that stretch reads MMDDTAMPAR. A disordered region spans residues 1–34; sequence MMDDTAMPARAEADAAEDELAAPAGIDRTAKADK. Residue 674 to 681 participates in ATP binding; it reads GPNMAGKS.

This sequence belongs to the DNA mismatch repair MutS family.

Functionally, this protein is involved in the repair of mismatches in DNA. It is possible that it carries out the mismatch recognition step. This protein has a weak ATPase activity. The polypeptide is DNA mismatch repair protein MutS (Azorhizobium caulinodans (strain ATCC 43989 / DSM 5975 / JCM 20966 / LMG 6465 / NBRC 14845 / NCIMB 13405 / ORS 571)).